A 449-amino-acid chain; its full sequence is Glucose-6-phosphate isomerase (449 aa).

The Proton donor role is filled by Glu-291. Catalysis depends on residues His-312 and Lys-426.

The protein belongs to the GPI family.

It localises to the cytoplasm. It carries out the reaction alpha-D-glucose 6-phosphate = beta-D-fructose 6-phosphate. The protein operates within carbohydrate biosynthesis; gluconeogenesis. It functions in the pathway carbohydrate degradation; glycolysis; D-glyceraldehyde 3-phosphate and glycerone phosphate from D-glucose: step 2/4. In terms of biological role, catalyzes the reversible isomerization of glucose-6-phosphate to fructose-6-phosphate. This chain is Glucose-6-phosphate isomerase, found in Streptococcus pyogenes serotype M28 (strain MGAS6180).